The following is a 255-amino-acid chain: High-affinity branched-chain amino acid transport ATP-binding protein BraF (255 aa).

The 249-residue stretch at 6–254 (LEVSGLTMRF…PDVIKAYLGE (249 aa)) folds into the ABC transporter domain. Position 38–45 (38–45 (GPNGAGKT)) interacts with ATP.

Belongs to the ABC transporter superfamily.

It localises to the cell inner membrane. Functionally, component of the high affinity leucine, isoleucine, valine, transport system (LIV-I), which is operative without Na(+) and is specific for alanine and threonine, in addition to branched-chain amino acids. The sequence is that of High-affinity branched-chain amino acid transport ATP-binding protein BraF (braF) from Pseudomonas aeruginosa (strain ATCC 15692 / DSM 22644 / CIP 104116 / JCM 14847 / LMG 12228 / 1C / PRS 101 / PAO1).